The sequence spans 354 residues: MRLLLRNYSLMEAVKRLLPRPRKKIYNLGACFELVDIPKISYNPSELSEPRFLEYSNLSDKLHLREAIDKILIPRVVGTTNHSIVREYIVQSLRDLDWDVEVNSFHDHAPIKGKLHFHNIIATLNPNAERYLVLSCHYDSKYMPGVEFLGATDSAVPCAMLLNLAQVLQEQLKPLKKSKLSLMLLFFDGEEAFEEWGPKDSIYGARHLAKKWHHEGKLDRIDMLVLLDLLGAPDPAFYSFFENTESWYMRIQSVETRLAKLQLLERYASSGVAQRDPTRYFQSQAMRSSFIEDDHIPFLRRNVPILHLIPVPFPSVWHTPDDNASVIDYATTDNLALIIRLFALEYLLAGTEAK.

A mitochondrion-targeting transit peptide spans 1-8 (MRLLLRNY). Cysteines 136 and 158 form a disulfide. Zn(2+) is bound at residue D153. Residue E190 is the Proton acceptor of the active site. E191 is a binding site for Zn(2+). Residue D228 is the Proton acceptor of the active site. H318 is a binding site for Zn(2+).

Belongs to the glutaminyl-peptide cyclotransferase family.

It is found in the secreted. It localises to the mitochondrion. The catalysed reaction is N-terminal L-glutaminyl-[peptide] = N-terminal 5-oxo-L-prolyl-[peptide] + NH4(+). Its activity is regulated as follows. Inhibited by imidazoles (imidazole, benzimidazole, 1-benzylimidazole, 1-methylimidazole, P150/03 and N-omega-acetylhistamine) and cysteamines (cysteamine and N-dimethylcysteamine). Inhibited by PDB50 1(3,4-dimethoxyphenyl)-3-(3-imidazol-1-ylpropyl)thiourea. In terms of biological role, acts as a glutaminyl-peptide cyclotransferase. Responsible for the biosynthesis of pyroglutamyl peptides. Might be more efficient in the conversion of tri and tetrapeptides in vitro. Might have a relative preference for substrates containing hydrophobic amino acids in vitro. In Drosophila melanogaster (Fruit fly), this protein is Glutaminyl-peptide cyclotransferase.